The primary structure comprises 69 residues: Light-harvesting protein B-1015 alpha chain (69 aa).

Residues 2–20 (ATEYRTASWKLWLILDPRR) are Cytoplasmic-facing. A helical transmembrane segment spans residues 21–41 (VLTALFVYLTVIALLIHFGLL). His-37 lines the a bacteriochlorophyll pocket. Residues 42-59 (STDRLNWWEFQRGLPKAA) lie on the Periplasmic side of the membrane. The propeptide occupies 60–69 (SLVVVPPAVG).

It belongs to the antenna complex alpha subunit family. The core complex is formed by different alpha and beta chains, binding bacteriochlorophyll molecules, and arranged most probably in tetrameric structures disposed around the reaction center. The non-pigmented gamma chains may constitute additional components.

Its subcellular location is the cell inner membrane. In terms of biological role, antenna complexes are light-harvesting systems, which transfer the excitation energy to the reaction centers. The protein is Light-harvesting protein B-1015 alpha chain (pufA) of Blastochloris viridis (Rhodopseudomonas viridis).